We begin with the raw amino-acid sequence, 245 residues long: Eukaryotic translation initiation factor 6 (245 aa).

The residue at position 113 (Tyr113) is a Phosphotyrosine. Thr165 carries the post-translational modification Phosphothreonine. Residue Ser166 is modified to Phosphoserine. Phosphoserine; by CK1 occurs at positions 174 and 175. The residue at position 235 (Ser235) is a Phosphoserine; by PKC. A phosphoserine mark is found at Ser239 and Ser243.

The protein belongs to the eIF-6 family. As to quaternary structure, monomer. Associates with the 60S ribosomal subunit. Interacts with RACK1. Interacts with DICER1, AGO2, TARBP2, MOV10 and RPL7A; they form a large RNA-induced silencing complex (RISC). Phosphorylation at Ser-174 and Ser-175 by CSNK1D/CK1 promotes nuclear export. Post-translationally, ufmylated by UFL1.

The protein resides in the cytoplasm. The protein localises to the nucleus. Its subcellular location is the nucleolus. Its function is as follows. Binds to the 60S ribosomal subunit and prevents its association with the 40S ribosomal subunit to form the 80S initiation complex in the cytoplasm. Behaves as a stimulatory translation initiation factor downstream insulin/growth factors. Is also involved in ribosome biogenesis. Associates with pre-60S subunits in the nucleus and is involved in its nuclear export. Cytoplasmic release of TIF6 from 60S subunits and nuclear relocalization is promoted by a RACK1 (RACK1)-dependent protein kinase C activity. In tissues responsive to insulin, controls fatty acid synthesis and glycolysis by exerting translational control of adipogenic transcription factors such as CEBPB, CEBPD and ATF4 that have G/C rich or uORF in their 5'UTR. Required for ROS-dependent megakaryocyte maturation and platelets formation, controls the expression of mitochondrial respiratory chain genes involved in reactive oxygen species (ROS) synthesis. Involved in miRNA-mediated gene silencing by the RNA-induced silencing complex (RISC). Required for both miRNA-mediated translational repression and miRNA-mediated cleavage of complementary mRNAs by RISC. Modulates cell cycle progression and global translation of pre-B cells, its activation seems to be rate-limiting in tumorigenesis and tumor growth. This Rattus norvegicus (Rat) protein is Eukaryotic translation initiation factor 6 (Eif6).